A 143-amino-acid polypeptide reads, in one-letter code: Large ribosomal subunit protein uL11 (143 aa).

The protein belongs to the universal ribosomal protein uL11 family. Part of the ribosomal stalk of the 50S ribosomal subunit. Interacts with L10 and the large rRNA to form the base of the stalk. L10 forms an elongated spine to which L12 dimers bind in a sequential fashion forming a multimeric L10(L12)X complex. Post-translationally, one or more lysine residues are methylated.

Its function is as follows. Forms part of the ribosomal stalk which helps the ribosome interact with GTP-bound translation factors. In Salinispora tropica (strain ATCC BAA-916 / DSM 44818 / JCM 13857 / NBRC 105044 / CNB-440), this protein is Large ribosomal subunit protein uL11.